Consider the following 225-residue polypeptide: Uracil-DNA glycosylase (225 aa).

Asp-65 (proton acceptor) is an active-site residue.

This sequence belongs to the uracil-DNA glycosylase (UDG) superfamily. UNG family.

It is found in the cytoplasm. The catalysed reaction is Hydrolyzes single-stranded DNA or mismatched double-stranded DNA and polynucleotides, releasing free uracil.. Functionally, excises uracil residues from the DNA which can arise as a result of misincorporation of dUMP residues by DNA polymerase or due to deamination of cytosine. The chain is Uracil-DNA glycosylase from Bacillus thuringiensis subsp. konkukian (strain 97-27).